The following is a 201-amino-acid chain: dTTP/UTP pyrophosphatase (201 aa).

Aspartate 81 (proton acceptor) is an active-site residue.

The protein belongs to the Maf family. YhdE subfamily. It depends on a divalent metal cation as a cofactor.

The protein resides in the cytoplasm. It carries out the reaction dTTP + H2O = dTMP + diphosphate + H(+). The catalysed reaction is UTP + H2O = UMP + diphosphate + H(+). Functionally, nucleoside triphosphate pyrophosphatase that hydrolyzes dTTP and UTP. May have a dual role in cell division arrest and in preventing the incorporation of modified nucleotides into cellular nucleic acids. This is dTTP/UTP pyrophosphatase from Dechloromonas aromatica (strain RCB).